The chain runs to 24 residues: Unknown protein 6 (24 aa).

The sequence is that of Unknown protein 6 from Lonomia obliqua (Moth).